We begin with the raw amino-acid sequence, 284 residues long: NADH-cytochrome b5 reductase 1 (284 aa).

Residues 8 to 28 (PFIIFATVAAIISSAVAYYFF) form a helical membrane-spanning segment. Residues 41–144 (NDFQKFPLIE…RGPKGFFTYT (104 aa)) enclose the FAD-binding FR-type domain. Residues 124–139 (ESKK…GPKG) and 150–182 (SFGM…KVSL) each bind FAD.

Belongs to the flavoprotein pyridine nucleotide cytochrome reductase family. As to quaternary structure, monomer. Component of the 2-(3-amino-3-carboxypropyl)histidine synthase complex composed of DPH1, DPH2, DPH3 and a NADH-dependent reductase, predominantly CBR1. Requires FAD as cofactor.

Its subcellular location is the mitochondrion outer membrane. The enzyme catalyses 2 Fe(III)-[cytochrome b5] + NADH = 2 Fe(II)-[cytochrome b5] + NAD(+) + H(+). It catalyses the reaction 2 Fe(3+)-[Dph3] + NADH = 2 Fe(2+)-[Dph3] + NAD(+) + H(+). Its pathway is protein modification; peptidyl-diphthamide biosynthesis. In terms of biological role, NADH-dependent reductase for DPH3 and cytochrome b5. Required for the first step of diphthamide biosynthesis, a post-translational modification of histidine which occurs in elongation factor 2. DPH1 and DPH2 transfer a 3-amino-3-carboxypropyl (ACP) group from S-adenosyl-L-methionine (SAM) to a histidine residue, the reaction is assisted by a reduction system comprising DPH3 and a NADH-dependent reductase, predominantly CBR1. By reducing DPH3, also involved in the formation of the tRNA wobble base modification mcm5s 2U (5-methoxycarbonylmethyl-2-thiouridine), mediated by the elongator complex. The cytochrome b5/NADH cytochrome b5 reductase electron transfer system supports the catalytic activity of several sterol biosynthetic enzymes. This chain is NADH-cytochrome b5 reductase 1 (CBR1), found in Debaryomyces hansenii (strain ATCC 36239 / CBS 767 / BCRC 21394 / JCM 1990 / NBRC 0083 / IGC 2968) (Yeast).